The sequence spans 635 residues: Threonine--tRNA ligase (635 aa).

The tract at residues 1–144 is editing domain; sequence MQLLLIHSDY…RSIRPEGTQR (144 aa). The tract at residues 215-514 is catalytic; it reads PHVELMRRLE…TEEGKVPMLP (300 aa). The Zn(2+) site is built by cysteine 307, histidine 359, and histidine 483.

This sequence belongs to the class-II aminoacyl-tRNA synthetase family. Homodimer. It depends on Zn(2+) as a cofactor.

Its subcellular location is the cytoplasm. The enzyme catalyses tRNA(Thr) + L-threonine + ATP = L-threonyl-tRNA(Thr) + AMP + diphosphate + H(+). Catalyzes the attachment of threonine to tRNA(Thr) in a two-step reaction: L-threonine is first activated by ATP to form Thr-AMP and then transferred to the acceptor end of tRNA(Thr). Also edits incorrectly charged L-seryl-tRNA(Thr). The chain is Threonine--tRNA ligase from Methanosarcina barkeri (strain Fusaro / DSM 804).